The following is a 122-amino-acid chain: uncharacterized protein (122 aa).

The next 2 helical transmembrane spans lie at 9 to 29 (VATVDAIFAISSSTFLWSTWV) and 60 to 80 (LFSFTSVLTVSTFTFASCLIM).

Its subcellular location is the cytoplasm. It localises to the membrane. This is an uncharacterized protein from Schizosaccharomyces pombe (strain 972 / ATCC 24843) (Fission yeast).